The sequence spans 252 residues: MAGHSKWANIKRQKAVVDAKKGKTFTQLSRAIILAARSGVPDPSGNFQLRTAIDKAKAAGIPNDNIERAIAKGAGTFGGDNASLEEIRYEGYGPGGVAILIEALTDNRNRTAADLRVAFSKNGGNLGETGCVSWMFDQKGVCVVSGVVDEDQLLEASLEGGAESYEMTEDETAEVFTEVANLEILNQTLKDQGFKVTDAELRWIPSNHLEVTEPDQARSLLKLIDTLEGLDDVQNVTSNFEMSENLMAVSFA.

The protein belongs to the TACO1 family.

The protein localises to the cytoplasm. This is Probable transcriptional regulatory protein all4276 from Nostoc sp. (strain PCC 7120 / SAG 25.82 / UTEX 2576).